The following is a 340-amino-acid chain: Galactoside alpha-(1,2)-fucosyltransferase 2 (340 aa).

Residues 1–7 (MLSMQAS) lie on the Cytoplasmic side of the membrane. The helical; Signal-anchor for type II membrane protein transmembrane segment at 8 to 28 (FFFPTGPFILFVFTASTIFHL) threads the bilayer. Over 29–340 (QQRMVKIQPT…EADLSPLLKH (312 aa)) the chain is Lumenal. Asn185, Asn251, Asn279, and Asn305 each carry an N-linked (GlcNAc...) asparagine glycan.

It localises to the golgi apparatus. Its subcellular location is the golgi stack membrane. It catalyses the reaction a beta-D-galactosyl-(1-&gt;3)-N-acetyl-beta-D-glucosaminyl derivative + GDP-beta-L-fucose = an alpha-L-Fuc-(1-&gt;2)-beta-D-Gal-(1-&gt;3)-beta-D-GlcNAc derivative + GDP + H(+). It carries out the reaction a beta-D-galactosyl-(1-&gt;4)-N-acetyl-beta-D-glucosaminyl derivative + GDP-beta-L-fucose = an alpha-L-Fuc-(1-&gt;2)-beta-D-Gal-(1-&gt;4)-beta-D-GlcNAc derivative + GDP + H(+). The enzyme catalyses a neolactoside nLc4Cer + GDP-beta-L-fucose = a neolactoside IV(2)-alpha-Fuc-nLc4Cer + GDP + H(+). The catalysed reaction is a neolactoside nLc4Cer(d18:1(4E)) + GDP-beta-L-fucose = a neolactoside IV(2)-alpha-Fuc-nLc4Cer(d18:1(4E)) + GDP + H(+). It catalyses the reaction a ganglioside GM1 + GDP-beta-L-fucose = a ganglioside Fuc-GM1 + GDP + H(+). It carries out the reaction a ganglioside GA1 + GDP-beta-L-fucose = a ganglioside Fuc-GA1 + GDP + H(+). The enzyme catalyses Lc4Cer + GDP-beta-L-fucose = alpha-L-fucosyl-(1-&gt;2)-beta-D-galactosyl-(1-&gt;3)-N-acetyl-beta-D-glucosaminyl-(1-&gt;3)-beta-D-galactosyl-(1-&gt;4)-beta-D-glucosyl-(1&lt;-&gt;1')-ceramide + GDP + H(+). The catalysed reaction is a beta-D-Gal-(1-&gt;3)-beta-D-GlcNAc-(1-&gt;3)-beta-D-Gal-(1-&gt;4)-beta-D-Glc-(1&lt;-&gt;1')-Cer(d18:1(4E)) + GDP-beta-L-fucose = alpha-L-fucosyl-(1-&gt;2)- beta-D-galactosyl-(1-&gt;3)-N-acetyl-beta-D-glucosaminyl-(1-&gt;3)-beta-D-galactosyl-(1-&gt;4)-beta-D-glucosyl-(1&lt;-&gt;1')-N-acylsphing-4-enine + GDP + H(+). It catalyses the reaction a ganglioside GD1b + GDP-beta-L-fucose = a ganglioside Fuc-GD1b + GDP + H(+). It carries out the reaction a ganglioside GM1 (d18:1(4E)) + GDP-beta-L-fucose = a ganglioside Fuc-GM1 (d18:1(4E)) + GDP + H(+). The enzyme catalyses a globoside GalGb4Cer (d18:1(4E)) + GDP-beta-L-fucose = a globoside Globo-H (d18:1(4E)) + GDP + H(+). The catalysed reaction is a lactoside III(4)-a-Fuc-Lc4Cer + GDP-beta-L-fucose = a lactoside IV(2),III(4)-a-[Fuc]2-Lc4Cer + GDP + H(+). It catalyses the reaction beta-D-galactosyl-(1-&gt;3)-N-acetyl-D-galactosamine + GDP-beta-L-fucose = alpha-L-fucosyl-(1-&gt;2)-beta-D-galactosyl-(1-&gt;3)-N-acetyl-D-galactosamine + GDP + H(+). It functions in the pathway protein modification; protein glycosylation. Catalyzes the transfer of L-fucose, from a guanosine diphosphate-beta-L-fucose, to the terminal galactose on both O- and N-linked glycans chains of cell surface glycoproteins and glycolipids and the resulting epitope regulates several processes such as cell-cell interaction including host-microbe interaction, cell surface expression and cell proliferation. Preferentially fucosylates gangliosides GA1 and GM1 in the antrum, cecum and colon and in the female reproductive organs. Fucosylated host glycoproteins or glycolipids mediate interaction with intestinal microbiota influencing its composition. Creates a soluble precursor oligosaccharide FuC-alpha ((1,2)Galbeta-) called the H antigen which is an essential substrate for the final step in the soluble ABO blood group antigen synthesis pathway. The polypeptide is Galactoside alpha-(1,2)-fucosyltransferase 2 (Sus scrofa (Pig)).